The chain runs to 561 residues: Arginine--tRNA ligase (561 aa).

Residues Ala129 to His139 carry the 'HIGH' region motif.

The protein belongs to the class-I aminoacyl-tRNA synthetase family. In terms of assembly, monomer.

The protein localises to the cytoplasm. It catalyses the reaction tRNA(Arg) + L-arginine + ATP = L-arginyl-tRNA(Arg) + AMP + diphosphate. This is Arginine--tRNA ligase from Bordetella avium (strain 197N).